The sequence spans 169 residues: Ribosome-binding factor A (169 aa).

The disordered stretch occupies residues 124 to 169; the sequence is AGAKHAGDADPYKSDIPEDVEIDEDDFDEEDEDLIDDEELDEDGNK. The span at 128-139 shows a compositional bias: basic and acidic residues; that stretch reads HAGDADPYKSDI. The segment covering 140 to 169 has biased composition (acidic residues); the sequence is PEDVEIDEDDFDEEDEDLIDDEELDEDGNK.

The protein belongs to the RbfA family. In terms of assembly, monomer. Binds 30S ribosomal subunits, but not 50S ribosomal subunits or 70S ribosomes.

The protein localises to the cytoplasm. Functionally, one of several proteins that assist in the late maturation steps of the functional core of the 30S ribosomal subunit. Associates with free 30S ribosomal subunits (but not with 30S subunits that are part of 70S ribosomes or polysomes). Required for efficient processing of 16S rRNA. May interact with the 5'-terminal helix region of 16S rRNA. This Arthrobacter sp. (strain FB24) protein is Ribosome-binding factor A.